The primary structure comprises 89 residues: Small ribosomal subunit protein uS15 (89 aa).

The protein belongs to the universal ribosomal protein uS15 family. In terms of assembly, part of the 30S ribosomal subunit. Forms a bridge to the 50S subunit in the 70S ribosome, contacting the 23S rRNA.

One of the primary rRNA binding proteins, it binds directly to 16S rRNA where it helps nucleate assembly of the platform of the 30S subunit by binding and bridging several RNA helices of the 16S rRNA. In terms of biological role, forms an intersubunit bridge (bridge B4) with the 23S rRNA of the 50S subunit in the ribosome. This chain is Small ribosomal subunit protein uS15, found in Neisseria gonorrhoeae (strain ATCC 700825 / FA 1090).